A 307-amino-acid polypeptide reads, in one-letter code: Ribulose bisphosphate carboxylase/oxygenase activase, chloroplastic (307 aa).

The N-terminal 46 residues, 1–46 (MSIPDDKEAGTIDEFLQKEGVLDILQKLDHDLVGLKPVKDRVREIA), are a transit peptide targeting the chloroplast. 73–80 (GSPGTGKT) lines the ATP pocket.

The protein belongs to the CbxX/CfxQ family. Forms homooligomers. Forms heterohexameric rings with the plastid-encoded Rca subunit consisting of 3 of each nuclear- and plastidial-encoded subunits that alternate in the ring.

Its subcellular location is the plastid. The protein resides in the chloroplast. In terms of biological role, required for the expression of ribulose 1,5-bisphosphate carboxylase/oxygenase (RuBisCo). ATPase involved in the activation of red-type RuBisCo, which tends to form inactive complexes with its substrate ribulose 1,5-bisphosphate (RuBP). Catalyzes the release of RuBP from inhibited RuBisCo in an ATP-dependent manner. Activation of RuBisCO involves the ATP-dependent carboxylation of the epsilon-amino group of lysine leading to a carbamate structure. The nuclear-encoded subunit plays a more critical role in activase function than the plastidial-encoded subunit. The polypeptide is Ribulose bisphosphate carboxylase/oxygenase activase, chloroplastic (Cyanidioschyzon merolae (strain NIES-3377 / 10D) (Unicellular red alga)).